The primary structure comprises 446 residues: C-type lectin domain family 18 member C (446 aa).

A signal peptide spans 1–26 (MLHPETSPGRGHLLAVLLALLGTAWA). The SCP domain maps to 52 to 182 (LSLHNRLRSW…AAIEAFVCAY (131 aa)). Asn-144 is a glycosylation site (N-linked (GlcNAc...) asparagine). In terms of domain architecture, EGF-like spans 228-261 (PRNPCRMSCQNHGRLNISTCHCHCPPGYTGRYCQ). 4 disulfide bridges follow: Cys-236-Cys-249, Cys-251-Cys-260, Cys-327-Cys-432, and Cys-408-Cys-424. The C-type lectin domain maps to 306–433 (IDGDCFMVSS…CKTRNRYICQ (128 aa)).

Detected in peripheral blood cells.

The protein resides in the secreted. Its subcellular location is the endoplasmic reticulum. It is found in the golgi apparatus. The protein localises to the endosome. Its function is as follows. Binds polysaccharidesin a Ca(2+)-independent manner with a preferentially binding to fucoidan, beta-glucans and galactans. This chain is C-type lectin domain family 18 member C (CLEC18C), found in Homo sapiens (Human).